A 96-amino-acid chain; its full sequence is Co-chaperonin GroES (96 aa).

Belongs to the GroES chaperonin family. Heptamer of 7 subunits arranged in a ring. Interacts with the chaperonin GroEL.

The protein localises to the cytoplasm. Functionally, together with the chaperonin GroEL, plays an essential role in assisting protein folding. The GroEL-GroES system forms a nano-cage that allows encapsulation of the non-native substrate proteins and provides a physical environment optimized to promote and accelerate protein folding. GroES binds to the apical surface of the GroEL ring, thereby capping the opening of the GroEL channel. This Teredinibacter turnerae (strain ATCC 39867 / T7901) protein is Co-chaperonin GroES.